The following is a 345-amino-acid chain: Phenylalanine--tRNA ligase alpha subunit (345 aa).

Glu272 is a Mg(2+) binding site.

It belongs to the class-II aminoacyl-tRNA synthetase family. Phe-tRNA synthetase alpha subunit type 1 subfamily. Tetramer of two alpha and two beta subunits. Mg(2+) is required as a cofactor.

It is found in the cytoplasm. It carries out the reaction tRNA(Phe) + L-phenylalanine + ATP = L-phenylalanyl-tRNA(Phe) + AMP + diphosphate + H(+). The chain is Phenylalanine--tRNA ligase alpha subunit from Prochlorococcus marinus (strain MIT 9312).